The following is a 411-amino-acid chain: MSSAATKATFCIQNGPSFEGISFGANKSVAGETVFTTSLVGYPESMTDPSYRGQILVFTQPLIGNYGVPSGEARDEYNLLKYFESPHIHVVGIVVAEYAYQYSHWTAVESLAQWCQREGVAAITGVDTRELVQYLREQGSSLGRITLADHDPVPYVNPMKTNLVAQVTTKKPFHVSALPGKAKANVALIDCGVKENIIRCLVKRGANVTVFPYDYRIQDVASEFDGIFLSNGPGNPELCQATISNVRELLNNPVYDCIPIFGICLGHQLLALASGASTHKLKYGNRAHNIPAMDLTTGQCHITSQNHGYAVDPETLPKDQWKPYFVNLNDKSNEGMIHLQRPIFSTQFHPEAKGGPLDTAILFDKFFDNIEKYQLQSQAKSSISLKVTYSTDKSRLQSINVTKLAKERVLF.

L-glutamine-binding residues include Ser50, Gly232, and Gly234. The region spanning 185-376 (NVALIDCGVK…FDNIEKYQLQ (192 aa)) is the Glutamine amidotransferase type-1 domain. The active-site Nucleophile is Cys264. Residues Leu265, Gln268, Asn306, Gly308, and Tyr309 each contribute to the L-glutamine site. Residues His349 and Glu351 contribute to the active site.

It belongs to the CarA family. As to quaternary structure, heterodimer composed of 2 chains; the small (or glutamine) chain promotes the hydrolysis of glutamine to ammonia, which is used by the large (or ammonia) chain to synthesize carbamoyl phosphate.

It is found in the cytoplasm. It catalyses the reaction hydrogencarbonate + L-glutamine + 2 ATP + H2O = carbamoyl phosphate + L-glutamate + 2 ADP + phosphate + 2 H(+). It carries out the reaction L-glutamine + H2O = L-glutamate + NH4(+). Its pathway is amino-acid biosynthesis; L-arginine biosynthesis; carbamoyl phosphate from bicarbonate: step 1/1. In terms of biological role, small subunit of the arginine-specific carbamoyl phosphate synthase (CPSase). CPSase catalyzes the formation of carbamoyl phosphate from the ammonia moiety of glutamine, carbonate, and phosphate donated by ATP, constituting the first step of 2 biosynthetic pathways, one leading to arginine and/or urea and the other to pyrimidine nucleotides. The small subunit (glutamine amidotransferase) binds and cleaves glutamine to supply the large subunit with the substrate ammonia. This Saccharomyces cerevisiae (strain ATCC 204508 / S288c) (Baker's yeast) protein is Carbamoyl phosphate synthase arginine-specific small chain (CPA1).